Consider the following 163-residue polypeptide: MAWLDQSARSLFLAEFVSSFLLAMRYFFKPKVTLNYPFEKGPLSPRFRGEHALRRYPNGEERCIACKLCEAICPALAITIEAGPRRNDGTRRTTRYDIDMTKCIYCGLCQEACPVDAIVEGPNFEFATETREELMYDKNRLLANGDRWEREIAKNIALDAPYR.

2 consecutive 4Fe-4S ferredoxin-type domains span residues Leu-53–Gly-83 and Thr-94–Asn-123. Residues Cys-63, Cys-66, Cys-69, Cys-73, Cys-103, Cys-106, Cys-109, and Cys-113 each contribute to the [4Fe-4S] cluster site.

Belongs to the complex I 23 kDa subunit family. NDH-1 is composed of 14 different subunits. Subunits NuoA, H, J, K, L, M, N constitute the membrane sector of the complex. [4Fe-4S] cluster is required as a cofactor.

The protein localises to the cell inner membrane. The catalysed reaction is a quinone + NADH + 5 H(+)(in) = a quinol + NAD(+) + 4 H(+)(out). Functionally, NDH-1 shuttles electrons from NADH, via FMN and iron-sulfur (Fe-S) centers, to quinones in the respiratory chain. The immediate electron acceptor for the enzyme in this species is believed to be ubiquinone. Couples the redox reaction to proton translocation (for every two electrons transferred, four hydrogen ions are translocated across the cytoplasmic membrane), and thus conserves the redox energy in a proton gradient. The protein is NADH-quinone oxidoreductase subunit I of Parvibaculum lavamentivorans (strain DS-1 / DSM 13023 / NCIMB 13966).